A 1436-amino-acid polypeptide reads, in one-letter code: MIKKIKNIINKIINFFSTIYILCKIYLYYNIKNRYEAYNILSVYGDDDFFNKPCPEDSSNWKDKLTFKWVERIIFVGFFRAPLNLNDISDLPSSLKVENTAPLLKDIIFNDSTIPLIKHIYSKFLPRNYIATGLFVFVSVFSFITPLILKNFLSYVEKIDEQKHIYIGIIQCFLLFLSSFINMASQQYSYWFGFKTSLEVKGALETIIFEKMTKLSNLSKKNYNIGSMLNLMSVDTDFFQYFFCHYYIEIFLFPIQILSLLGFLIYVIGIAGFVGFLVMLITIPLSSFLGTQISKNLSTSMGYADTRISLTGELINGIKFLKQYAWEKMFCERIEEQRKLQLKYLYIRIIYWVLVQIVTQASSGLVLVSTFTTYTLLGYEVSLEIAFTSITILQNLRRPIESLPDCLHKFISLIASAKRIETFLQSSELQNQPFIHNQSGLNDILIRNINFNWNEHNLKLKNNKNNQNNNQNKRSIILSSGEQFEITNDFTFDGIDIQDDNYDYEKEYKINYNNNEEEENFMTDCLLKIKPLIKDRRLQQQQADYQDLLSINLPPPPSENVDFKAPKGLLTIISGGVRSGKTSLASGLLGEICKAVDKSSPDSVNSILSTIQQPFLQSTSFRENILFGKPMNMERYIKVIEACCLAPDLLAMGEGKDLTEIGERGINLSNGLKHRIQLARALYADSDCYILDEILSSVDPEIANYIFQHCIKGMMKGKTVILVTHQIQFISSADHVVVVDNGVLIQGTYLELLRMGIDFEMILKEKENRIEKQIVQLQEDEDYYEEVEILDFTMNNNNNNNNNNNNNNSNFNGNNKLKRSSISLPKGISIESIISKDFDQTTIEKAKLFVQEDRNKGDPGWIIYKKYIRMGSSISFFIFTCIIYLTSQIILLLSDYWLQSWASHDRLNVSEPTDVHYLLIYLAYIGGFVFTLGVRYLLIAKITFGSAETLHRSLLKSIIRAPLTFFEQNPVGRILNRFGKDISDIDILLLDCFSDVLYCGACLVTSIGIIIYISPYIAIPFVILIAINYIFQLFYNYSVLELKRIQSISRSPVYSLLSEVYNGLTTIRSFGQQERFFNMMKDNININLRVFFYNFAVSRWIGIRVEFLSAIVVLMSALFSIFNDNPGLSALGVTTALGITFNLNWFMRQFGELESRINSVERVQSYISIPKEKETNEDEFIQTGFIWPSRGEIEFKNVEIRYRPNSIATLRNFSMKINAQERIGIIGRSGSGKSTIGMSLFRMIECSSGSILIDGDDISQIDLKRLRSSIGIVPQDPFIFSGSIRLNLDPFDQFTDNEIWEALSKVKLKKMVSTMPMKLESLVQGGDGLTIGNKQLLCLCRAILRNSKIVLFDEATNSIDFQTTRLIKQTIEENFKDCTILTIAHNIDTILDSDKIAIIDEGELIEFDTPLNLIKDSTSRFSKLIKLNNNQKNKLN.

7 consecutive transmembrane segments (helical) span residues 8-28, 129-149, 165-185, 238-258, 261-281, 349-369, and 373-393; these read IINKIINFFSTIYILCKIYLY, YIATGLFVFVSVFSFITPLIL, IYIGIIQCFLLFLSSFINMAS, FFQYFFCHYYIEIFLFPIQIL, LGFLIYVIGIAGFVGFLVMLI, IIYWVLVQIVTQASSGLVLVS, and TYTLLGYEVSLEIAFTSITIL. The ABC transmembrane type-1 1 domain maps to 128-412; sequence NYIATGLFVF…LPDCLHKFIS (285 aa). An ABC transporter 1 domain is found at 543 to 766; sequence ADYQDLLSIN…IDFEMILKEK (224 aa). 575–582 is a binding site for ATP; the sequence is GGVRSGKT. Residues 865 to 1155 enclose the ABC transmembrane type-1 2 domain; that stretch reads KKYIRMGSSI…FMRQFGELES (291 aa). 6 consecutive transmembrane segments (helical) span residues 873–893, 919–939, 985–1005, 1017–1039, 1101–1121, and 1127–1147; these read SISFFIFTCIIYLTSQIILLL, LIYLAYIGGFVFTLGVRYLLI, IDILLLDCFSDVLYCGACLVT, IAIPFVILIAINYIFQLFYNYSV, IGIRVEFLSAIVVLMSALFSI, and GLSALGVTTALGITFNLNWFM. The 234-residue stretch at 1193 to 1426 folds into the ABC transporter 2 domain; that stretch reads IEFKNVEIRY…STSRFSKLIK (234 aa). 1227–1234 contacts ATP; it reads GRSGSGKS.

This sequence belongs to the ABC transporter superfamily. ABCC family. Conjugate transporter (TC 3.A.1.208) subfamily.

Its subcellular location is the membrane. This chain is ABC transporter C family member 15 (abcC15), found in Dictyostelium discoideum (Social amoeba).